Reading from the N-terminus, the 640-residue chain is Glutamyl-tRNA(Gln) amidotransferase subunit E (640 aa).

It belongs to the GatB/GatE family. GatE subfamily. Heterodimer of GatD and GatE.

The enzyme catalyses L-glutamyl-tRNA(Gln) + L-glutamine + ATP + H2O = L-glutaminyl-tRNA(Gln) + L-glutamate + ADP + phosphate + H(+). In terms of biological role, allows the formation of correctly charged Gln-tRNA(Gln) through the transamidation of misacylated Glu-tRNA(Gln) in organisms which lack glutaminyl-tRNA synthetase. The reaction takes place in the presence of glutamine and ATP through an activated gamma-phospho-Glu-tRNA(Gln). The GatDE system is specific for glutamate and does not act on aspartate. The chain is Glutamyl-tRNA(Gln) amidotransferase subunit E from Methanopyrus kandleri (strain AV19 / DSM 6324 / JCM 9639 / NBRC 100938).